The following is a 399-amino-acid chain: MTTYSFPNTKGKYGEFGGRFVPELLMPAVLELEKAYEDALKDESFNEELQTYLTEYIGRETPLYHAKKLTEHAGGAQIYLKREDLNHTGAHKINNTIGQALLTLRMGKKKVVAETGAGQHGVATATVCSLLGLECIVFMGEEDIKRQKLNVFRMELLGAEVVSVSQGSGTLKDAVNEALRYWVNNVNDTHYIIGSVVGPHPFPKIVRDFQSVIGKETKEQSMKKIGSLPDAVVACVGGGSNAMGMFYPFIDDKEVTLFGVEAAGAGLDTKQHAATLTGGSPGMLHGTFTYLLQDDCGQIEEAFSISAGLDYPGIGPEHSHLHQTKRVTYSSITDEEALEAFQLLSKTEGIIPALESAHAVSYATKLAKEMNPEQSIVICLSGRGDKDVEQVKERLEGEQ.

Position 92 is an N6-(pyridoxal phosphate)lysine (Lys92).

This sequence belongs to the TrpB family. In terms of assembly, tetramer of two alpha and two beta chains. Requires pyridoxal 5'-phosphate as cofactor.

The catalysed reaction is (1S,2R)-1-C-(indol-3-yl)glycerol 3-phosphate + L-serine = D-glyceraldehyde 3-phosphate + L-tryptophan + H2O. It functions in the pathway amino-acid biosynthesis; L-tryptophan biosynthesis; L-tryptophan from chorismate: step 5/5. Its function is as follows. The beta subunit is responsible for the synthesis of L-tryptophan from indole and L-serine. The sequence is that of Tryptophan synthase beta chain from Oceanobacillus iheyensis (strain DSM 14371 / CIP 107618 / JCM 11309 / KCTC 3954 / HTE831).